The following is a 252-amino-acid chain: Adapter protein MecA (252 aa).

It belongs to the MecA family. Homodimer.

Enables the recognition and targeting of unfolded and aggregated proteins to the ClpC protease or to other proteins involved in proteolysis. In Streptococcus uberis (strain ATCC BAA-854 / 0140J), this protein is Adapter protein MecA.